Here is a 246-residue protein sequence, read N- to C-terminus: Complement C1q subcomponent subunit C (246 aa).

The first 29 residues, 1–29 (MVVGPSCQPPCGLCLLLLFLLALPLRSQA), serve as a signal peptide directing secretion. The region spanning 32 to 113 (GCYGIPGMPG…GPPGEPGVEG (82 aa)) is the Collagen-like domain. A 4-hydroxyproline mark is found at Pro-37, Pro-40, Pro-43, Pro-46, and Pro-64. Positions 44–116 (GAPGKDGHDG…GEPGVEGRYK (73 aa)) are disordered. Lys-76 carries the post-translational modification 5-hydroxylysine. Lys-76 is a glycosylation site (O-linked (Gal...) hydroxylysine). Pro-82, Pro-97, Pro-100, and Pro-106 each carry 4-hydroxyproline. Over residues 99 to 108 (DPGPRGPPGE) the composition is skewed to pro residues. The C1q domain maps to 116 to 246 (KQKHQSVFTV…VFSGFLLFPD (131 aa)). The cysteines at positions 180 and 194 are disulfide-linked.

In terms of assembly, core component of the complement C1 complex, a calcium-dependent complex composed of 1 molecule of the C1Q subcomplex, 2 molecules of C1R and 2 molecules of C1S. The C1Q subcomplex is composed 18 subunits: 3 chains of C1QA, C1QB, and C1QC trimerize to form 6 collagen-like triple helices connected to six globular ligand-recognition modules (C1q domain). In terms of processing, O-linked glycans consist of Glc-Gal disaccharides bound to the oxygen atom of post-translationally added hydroxyl groups.

The protein localises to the secreted. It localises to the cell surface. The C1Q subcomplex is inhibited by sulfated molecules, such as triterpenoid sulfates, heparan sulfate, or chondroitin sulfates. In terms of biological role, core component of the complement C1 complex, a multiprotein complex that initiates the classical pathway of the complement system, a cascade of proteins that leads to phagocytosis and breakdown of pathogens and signaling that strengthens the adaptive immune system. The classical complement pathway is initiated by the C1Q subcomplex of the C1 complex, which specifically binds IgG or IgM immunoglobulins complexed with antigens, forming antigen-antibody complexes on the surface of pathogens: C1QA, together with C1QB and C1QC, specifically recognizes and binds the Fc regions of IgG or IgM via its C1q domain. Immunoglobulin-binding activates the proenzyme C1R, which cleaves C1S, initiating the proteolytic cascade of the complement system. The C1Q subcomplex is activated by a hexamer of IgG complexed with antigens, while it is activated by a pentameric IgM. The C1Q subcomplex also recognizes and binds phosphatidylserine exposed on the surface of cells undergoing programmed cell death, possibly promoting activation of the complement system. In Mus musculus (Mouse), this protein is Complement C1q subcomponent subunit C.